Consider the following 47-residue polypeptide: Photosystem II reaction center protein K (47 aa).

A propeptide spanning residues 1-10 (MAAFSLDLLA) is cleaved from the precursor. The chain crosses the membrane as a helical span at residues 19-39 (FGPLIDILPIIPVFFLLLAFV).

Belongs to the PsbK family. As to quaternary structure, PSII is composed of 1 copy each of membrane proteins PsbA, PsbB, PsbC, PsbD, PsbE, PsbF, PsbH, PsbI, PsbJ, PsbK, PsbL, PsbM, PsbT, PsbX, PsbY, PsbZ, Psb30/Ycf12, peripheral proteins PsbO, CyanoQ (PsbQ), PsbU, PsbV and a large number of cofactors. It forms dimeric complexes.

It localises to the cellular thylakoid membrane. In terms of biological role, one of the components of the core complex of photosystem II (PSII). PSII is a light-driven water:plastoquinone oxidoreductase that uses light energy to abstract electrons from H(2)O, generating O(2) and a proton gradient subsequently used for ATP formation. It consists of a core antenna complex that captures photons, and an electron transfer chain that converts photonic excitation into a charge separation. In Synechococcus sp. (strain WH7803), this protein is Photosystem II reaction center protein K.